A 98-amino-acid chain; its full sequence is Ferredoxin-like protein (98 aa).

The region spanning 57–87 (GQVEVTVDGCIECGTCRVIAEPTGDIEWSHP) is the 4Fe-4S ferredoxin-type domain.

To ferredoxins from P.putida and C.tartarivorum, ferredoxin I from A.vinelandii, ferredoxin II from D.desulfuricans.

Its function is as follows. Could be a 3Fe-4S cluster-containing protein. In Bradyrhizobium diazoefficiens (strain JCM 10833 / BCRC 13528 / IAM 13628 / NBRC 14792 / USDA 110), this protein is Ferredoxin-like protein (fixX).